The chain runs to 275 residues: Translation initiation factor 2 subunit alpha (275 aa).

The S1 motif domain maps to 12–83; it reads GEFVVATVKN…EKGHIDLSLK (72 aa).

It belongs to the eIF-2-alpha family. In terms of assembly, heterotrimer composed of an alpha, a beta and a gamma chain.

EIF-2 functions in the early steps of protein synthesis by forming a ternary complex with GTP and initiator tRNA. This is Translation initiation factor 2 subunit alpha from Thermococcus kodakarensis (strain ATCC BAA-918 / JCM 12380 / KOD1) (Pyrococcus kodakaraensis (strain KOD1)).